A 420-amino-acid chain; its full sequence is Putative epoxide hydrolase (420 aa).

This sequence belongs to the peptidase S33 family.

The protein operates within mycotoxin biosynthesis. In terms of biological role, putative epoxide hydrolase; part of the fragmented gene cluster that mediates the biosynthesis of dothistromin (DOTH), a polyketide toxin very similar in structure to the aflatoxin precursor, versicolorin B. The first step of the pathway is the conversion of acetate to norsolorinic acid (NOR) and requires the fatty acid synthase subunits hexA and hexB, as well as the polyketide synthase pksA. PksA combines a hexanoyl starter unit and 7 malonyl-CoA extender units to synthesize the precursor NOR. The hexanoyl starter unit is provided to the acyl-carrier protein (ACP) domain by the fungal fatty acid synthase hexA/hexB. The second step is the conversion of NOR to averantin (AVN) and requires the norsolorinic acid ketoreductase nor1, which catalyzes the dehydration of norsolorinic acid to form (1'S)-averantin. The cytochrome P450 monooxygenase avnA then catalyzes the hydroxylation of AVN to 5'hydroxyaverantin (HAVN). The next step is performed by adhA that transforms HAVN to averufin (AVF). Averufin might then be converted to hydroxyversicolorone by cypX and avfA. Hydroxyversicolorone is further converted versiconal hemiacetal acetate (VHA) by moxY. VHA is then the substrate for the versiconal hemiacetal acetate esterase est1 to yield versiconal (VAL). Versicolorin B synthase vbsA then converts VAL to versicolorin B (VERB) by closing the bisfuran ring. Then, the activity of the versicolorin B desaturase verB leads to versicolorin A (VERA). DotB, a predicted chloroperoxidase, may perform epoxidation of the A-ring of VERA. Alternatively, a cytochrome P450, such as cypX or avnA could catalyze this step. It is also possible that another, uncharacterized, cytochrome P450 enzyme is responsible for this step. Opening of the epoxide could potentially be achieved by the epoxide hydrolase epoA. However, epoA seems not to be required for DOTH biosynthesis, but other epoxide hydrolases may have the ability to complement this hydrolysis. Alternatively, opening of the epoxide ring could be achieved non-enzymatically. The next step is the deoxygenation of ring A to yield the 5,8-dihydroxyanthraquinone which is most likely catalyzed by the NADPH dehydrogenase encoded by ver1. The last stages of DOTH biosynthesis are proposed to involve hydroxylation of the bisfuran. OrdB and norB might have oxidative roles here. An alternative possibility is that cytochrome P450 monoogenases such as avnA and cypX might perform these steps in addition to previously proposed steps. This is Putative epoxide hydrolase from Dothistroma septosporum (Red band needle blight fungus).